The following is a 740-amino-acid chain: Polyribonucleotide nucleotidyltransferase (740 aa).

Mg(2+)-binding residues include aspartate 514 and aspartate 520. A KH domain is found at 580–639 (PRIITVKIPVDKIGEVIGPKRQMINQIQEDTGAEITIEDDGTIYIGAADGPAAEAARATI). Residues 651–723 (GERILGSVVK…SRGKLSLIPV (73 aa)) form the S1 motif domain.

The protein belongs to the polyribonucleotide nucleotidyltransferase family. In terms of assembly, homotrimer. Mg(2+) is required as a cofactor.

Its subcellular location is the cytoplasm. It carries out the reaction RNA(n+1) + phosphate = RNA(n) + a ribonucleoside 5'-diphosphate. Its function is as follows. Involved in mRNA degradation. Catalyzes the phosphorolysis of single-stranded polyribonucleotides processively in the 3'- to 5'-direction. The sequence is that of Polyribonucleotide nucleotidyltransferase from Streptomyces antibioticus.